A 208-amino-acid polypeptide reads, in one-letter code: Superoxide dismutase [Mn] 2 (208 aa).

Mn(2+)-binding residues include histidine 28, histidine 83, aspartate 165, and histidine 169.

This sequence belongs to the iron/manganese superoxide dismutase family. As to quaternary structure, homodimer. Mn(2+) is required as a cofactor.

The enzyme catalyses 2 superoxide + 2 H(+) = H2O2 + O2. Destroys superoxide anion radicals which are normally produced within the cells and which are toxic to biological systems. In Bacillus anthracis, this protein is Superoxide dismutase [Mn] 2 (sodA2).